The following is a 462-amino-acid chain: Zinc finger CCCH domain-containing protein 34 (462 aa).

Residues 1–13 (MERYGRPGEEGSR) are compositionally biased toward basic and acidic residues. The segment at 1-26 (MERYGRPGEEGSRSDPSLEWTSHGGE) is disordered. 3 C3H1-type zinc fingers span residues 54–82 (RPDE…HPRD), 100–128 (RMGH…HPRQ), and 148–176 (RPGE…HPVP). A compositionally biased stretch (polar residues) spans 288–303 (TGTYQSVPSSNSTSKE). The segment at 288–310 (TGTYQSVPSSNSTSKEFPQRPDQ) is disordered. 2 consecutive C3H1-type zinc fingers follow at residues 307 to 335 (RPDQ…HPVD) and 353 to 381 (RPGV…HSMS). The segment covering 405 to 418 (SSSLSGSSAPVSSS) has biased composition (low complexity). Positions 405 to 462 (SSSLSGSSAPVSSSNEPTKEAVTPAVSSMVSGLSRPEPAETSGDSASVSGSIEAKTSS) are disordered. Residues 446 to 462 (SGDSASVSGSIEAKTSS) show a composition bias toward polar residues.

The protein localises to the nucleus. This Arabidopsis thaliana (Mouse-ear cress) protein is Zinc finger CCCH domain-containing protein 34.